Reading from the N-terminus, the 174-residue chain is Peptidyl-prolyl cis-trans isomerase D, mitochondrial (174 aa).

Residues 10–173 enclose the PPIase cyclophilin-type domain; sequence FFQIKQGNTP…AACVIEDCGQ (164 aa).

It belongs to the cyclophilin-type PPIase family. PPIase D subfamily.

It localises to the mitochondrion. It catalyses the reaction [protein]-peptidylproline (omega=180) = [protein]-peptidylproline (omega=0). With respect to regulation, binds cyclosporin A (CsA). CsA mediates some of its effects via an inhibitory action on PPIase. In terms of biological role, PPIases accelerate the folding of proteins. It catalyzes the cis-trans isomerization of proline imidic peptide bonds in oligopeptides. The polypeptide is Peptidyl-prolyl cis-trans isomerase D, mitochondrial (cypD) (Dictyostelium discoideum (Social amoeba)).